The following is a 147-amino-acid chain: MKIWVDADACPVLVKQILFKAAQRTQVEMTLVANQHIPVPPDKNITSIQVQSGFDMADDYIVEQCVANDLVITADIPLAAEVIAKGAHALNPRGELYTKESIGSILNIRDFMDTMRSSGVQTGGPGAYGNKEKQAFANNLDRLLAQR.

The protein belongs to the UPF0178 family.

The protein is UPF0178 protein Patl_1318 of Pseudoalteromonas atlantica (strain T6c / ATCC BAA-1087).